The chain runs to 389 residues: Putative zinc finger CCCH domain-containing protein 10 (389 aa).

The span at 1–11 (MANVSFTFDSQ) shows a compositional bias: polar residues. Positions 1–110 (MANVSFTFDS…QDRRGSESRM (110 aa)) are disordered. Basic and acidic residues-rich tracts occupy residues 12–52 (EQNK…RVSE) and 86–110 (RSHE…ESRM). 2 C3H1-type zinc fingers span residues 131-157 (RPGE…YNHP) and 158-190 (PLQE…HPKE). Residues 183–296 (CPFNHPKERD…ATATGKVSGK (114 aa)) are disordered. Composition is skewed to basic and acidic residues over residues 204-243 (PDLR…KEDA) and 251-284 (RPRD…RSSR).

The protein is Putative zinc finger CCCH domain-containing protein 10 of Arabidopsis thaliana (Mouse-ear cress).